A 215-amino-acid polypeptide reads, in one-letter code: Probable nicotinate-nucleotide adenylyltransferase (215 aa).

This sequence belongs to the NadD family.

The catalysed reaction is nicotinate beta-D-ribonucleotide + ATP + H(+) = deamido-NAD(+) + diphosphate. It functions in the pathway cofactor biosynthesis; NAD(+) biosynthesis; deamido-NAD(+) from nicotinate D-ribonucleotide: step 1/1. Catalyzes the reversible adenylation of nicotinate mononucleotide (NaMN) to nicotinic acid adenine dinucleotide (NaAD). This is Probable nicotinate-nucleotide adenylyltransferase from Gluconacetobacter diazotrophicus (strain ATCC 49037 / DSM 5601 / CCUG 37298 / CIP 103539 / LMG 7603 / PAl5).